A 416-amino-acid polypeptide reads, in one-letter code: Probable 26S proteasome regulatory subunit rpn-6.2 (416 aa).

In terms of domain architecture, PCI spans 217–386; sequence YKTSFSYFYE…DTVVVYPKAD (170 aa).

This sequence belongs to the proteasome subunit S9 family. As to quaternary structure, component of the lid subcomplex of the 19S proteasome regulatory particle complex (also named PA700 complex). The 26S proteasome consists of a 20S proteasome core and two 19S regulatory subunits.

In terms of biological role, component of the lid subcomplex of the 26S proteasome, a multiprotein complex involved in the ATP-dependent degradation of ubiquitinated proteins. In the complex, rpn-6.2 is required for proteasome assembly. The protein is Probable 26S proteasome regulatory subunit rpn-6.2 (rpn-6.2) of Caenorhabditis elegans.